The primary structure comprises 563 residues: Arginine--tRNA ligase (563 aa).

The short motif at 121–131 (PNIAKPFSIGH) is the 'HIGH' region element.

Belongs to the class-I aminoacyl-tRNA synthetase family. Monomer.

It localises to the cytoplasm. It catalyses the reaction tRNA(Arg) + L-arginine + ATP = L-arginyl-tRNA(Arg) + AMP + diphosphate. The protein is Arginine--tRNA ligase of Streptococcus pyogenes serotype M18 (strain MGAS8232).